Here is a 393-residue protein sequence, read N- to C-terminus: Methylthioribose-1-phosphate isomerase (393 aa).

Catalysis depends on Asp265, which acts as the Proton donor.

Belongs to the eIF-2B alpha/beta/delta subunits family. MtnA subfamily.

The protein resides in the cytoplasm. The protein localises to the nucleus. It carries out the reaction 5-(methylsulfanyl)-alpha-D-ribose 1-phosphate = 5-(methylsulfanyl)-D-ribulose 1-phosphate. It participates in amino-acid biosynthesis; L-methionine biosynthesis via salvage pathway; L-methionine from S-methyl-5-thio-alpha-D-ribose 1-phosphate: step 1/6. Its function is as follows. Catalyzes the interconversion of methylthioribose-1-phosphate (MTR-1-P) into methylthioribulose-1-phosphate (MTRu-1-P). The protein is Methylthioribose-1-phosphate isomerase of Cryptococcus neoformans var. neoformans serotype D (strain B-3501A) (Filobasidiella neoformans).